The following is a 190-amino-acid chain: Surfactant protein C (190 aa).

Residues 1 to 24 (MDVGSKEVLMESPPDYTAVPGGRL) constitute a propeptide that is removed on maturation. S-palmitoyl cysteine attachment occurs at residues Cys28 and Cys29. Positions 59–190 (HMSQKHTEMV…LCGEVPLYYT (132 aa)) are excised as a propeptide. Residues 94–190 (FSIGSTGTVV…LCGEVPLYYT (97 aa)) form the BRICHOS domain. A disulfide bond links Cys121 and Cys182.

It localises to the secreted. The protein resides in the extracellular space. It is found in the surface film. Its function is as follows. Pulmonary surfactant associated proteins promote alveolar stability by lowering the surface tension at the air-liquid interface in the peripheral air spaces. The polypeptide is Surfactant protein C (SFTPC) (Bos taurus (Bovine)).